We begin with the raw amino-acid sequence, 491 residues long: Glutamyl-tRNA(Gln) amidotransferase subunit A (491 aa).

The Charge relay system role is filled by Ser-158. The active-site Acyl-ester intermediate is the Ser-182.

It belongs to the amidase family. GatA subfamily. Heterotrimer of A, B and C subunits.

The catalysed reaction is L-glutamyl-tRNA(Gln) + L-glutamine + ATP + H2O = L-glutaminyl-tRNA(Gln) + L-glutamate + ADP + phosphate + H(+). Functionally, allows the formation of correctly charged Gln-tRNA(Gln) through the transamidation of misacylated Glu-tRNA(Gln) in organisms which lack glutaminyl-tRNA synthetase. The reaction takes place in the presence of glutamine and ATP through an activated gamma-phospho-Glu-tRNA(Gln). The polypeptide is Glutamyl-tRNA(Gln) amidotransferase subunit A (Bradyrhizobium diazoefficiens (strain JCM 10833 / BCRC 13528 / IAM 13628 / NBRC 14792 / USDA 110)).